A 529-amino-acid polypeptide reads, in one-letter code: Arginine--tRNA ligase (529 aa).

The 'HIGH' region signature appears at 113–123 (ANPTGPLHIGH).

It belongs to the class-I aminoacyl-tRNA synthetase family. In terms of assembly, monomer.

Its subcellular location is the cytoplasm. The enzyme catalyses tRNA(Arg) + L-arginine + ATP = L-arginyl-tRNA(Arg) + AMP + diphosphate. The chain is Arginine--tRNA ligase from Campylobacter curvus (strain 525.92).